The following is a 388-amino-acid chain: Protein RecA (388 aa).

79-86 (GPESSGKT) lines the ATP pocket. The segment at 347–388 (IDGEEVSEQDTENKKDEPKKEEAVNEEVPLDLGDELEIEIEE) is disordered. A compositionally biased stretch (basic and acidic residues) spans 357 to 369 (TENKKDEPKKEEA). Acidic residues predominate over residues 370–388 (VNEEVPLDLGDELEIEIEE).

This sequence belongs to the RecA family.

Its subcellular location is the cytoplasm. In terms of biological role, can catalyze the hydrolysis of ATP in the presence of single-stranded DNA, the ATP-dependent uptake of single-stranded DNA by duplex DNA, and the ATP-dependent hybridization of homologous single-stranded DNAs. It interacts with LexA causing its activation and leading to its autocatalytic cleavage. The protein is Protein RecA of Streptococcus pneumoniae (strain Hungary19A-6).